A 210-amino-acid chain; its full sequence is Prolactin (210 aa).

A signal peptide spans 1-23; sequence MTQGSRLYFAVAVLMCGFVSING. 2 disulfide bridges follow: cysteine 69/cysteine 183 and cysteine 200/cysteine 210.

Belongs to the somatotropin/prolactin family. As to expression, pituitary gland.

Its subcellular location is the secreted. The protein is Prolactin (prl1) of Carassius auratus (Goldfish).